A 179-amino-acid polypeptide reads, in one-letter code: Large ribosomal subunit protein uL5 (179 aa).

The protein belongs to the universal ribosomal protein uL5 family. Part of the 50S ribosomal subunit; part of the 5S rRNA/L5/L18/L25 subcomplex. Contacts the 5S rRNA and the P site tRNA. Forms a bridge to the 30S subunit in the 70S ribosome.

Its function is as follows. This is one of the proteins that bind and probably mediate the attachment of the 5S RNA into the large ribosomal subunit, where it forms part of the central protuberance. In the 70S ribosome it contacts protein S13 of the 30S subunit (bridge B1b), connecting the 2 subunits; this bridge is implicated in subunit movement. Contacts the P site tRNA; the 5S rRNA and some of its associated proteins might help stabilize positioning of ribosome-bound tRNAs. In Neisseria meningitidis serogroup C (strain 053442), this protein is Large ribosomal subunit protein uL5.